The chain runs to 263 residues: Purine nucleoside phosphorylase SACOL1200 (263 aa).

3 residues coordinate Zn(2+): H79, C124, and H141.

This sequence belongs to the purine nucleoside phosphorylase YfiH/LACC1 family. Homodimer. The cofactor is Cu(2+). Zn(2+) serves as cofactor.

The catalysed reaction is adenosine + phosphate = alpha-D-ribose 1-phosphate + adenine. The enzyme catalyses S-methyl-5'-thioadenosine + phosphate = 5-(methylsulfanyl)-alpha-D-ribose 1-phosphate + adenine. It carries out the reaction inosine + phosphate = alpha-D-ribose 1-phosphate + hypoxanthine. It catalyses the reaction adenosine + H2O + H(+) = inosine + NH4(+). In terms of biological role, purine nucleoside enzyme that catalyzes the phosphorolysis of adenosine and inosine nucleosides, yielding D-ribose 1-phosphate and the respective free bases, adenine and hypoxanthine. Also catalyzes the phosphorolysis of S-methyl-5'-thioadenosine into adenine and S-methyl-5-thio-alpha-D-ribose 1-phosphate. Also has adenosine deaminase activity. The chain is Purine nucleoside phosphorylase SACOL1200 from Staphylococcus aureus (strain COL).